The primary structure comprises 373 residues: Partitioning protein REP1 (373 aa).

Residues 1–76 (MNGERLLACI…EKELDWPDPA (76 aa)) are interaction with REP2. Positions 1–129 (MNGERLLACI…LNRRGKGIRR (129 aa)) are interaction with REP2 and self-association. Residues 349–373 (FEEHWKPVDVEVEFRCKFKERKVDG) form a nuclear localization region.

Interacts with REP2.

It is found in the nucleus. Functionally, part of the plasmid partitioning system, which ensures the equal distribution of replicated plasmid molecules to daughter cells. The plasmids exist as well-organized plasmid foci within the nucleus that stay together throughout the cell-cycle and act as entity during segregation, effetively reducing copy number to one. Plasmid partitioning requires the proteins REP1, REP2, and a cis-acting locus STB (REP3). REP1-REP2 stably associate with CSE4-containing chromatin at STB during S-phase, marking the locus with a centromeric tag, and thereby probably catching mitotic spindle microtubules to the plasmid cluster and coupling plasmid segregation to chromosome segregation. REP1-REP2 are required to recruit the cohesin complex to the STB locus for pairing of the replicated plasmid cluster, a prerequisite for successful plasmid segregation. REP1-REP2 also negatively regulate expression of site-specific recombinase FLP and of RAF1. The sequence is that of Partitioning protein REP1 (REP1) from Saccharomyces cerevisiae (strain ATCC 204508 / S288c) (Baker's yeast).